The sequence spans 592 residues: Cyclin-dependent kinase-like 3 (592 aa).

The 283-residue stretch at 4–286 (YETLGKVGEG…SSDLLHHEYF (283 aa)) folds into the Protein kinase domain. Residues 10-18 (VGEGSYGTV) and Lys33 each bind ATP. A [NKR]KIAxRE motif is present at residues 44 to 50 (NKIAMRE). Catalysis depends on Asp125, which acts as the Proton acceptor. Residue Thr158 is modified to Phosphothreonine. Tyr160 is modified (phosphotyrosine). The span at 368-379 (GDISEPKKKEYE) shows a compositional bias: basic and acidic residues. Disordered regions lie at residues 368–390 (GDISEPKKKEYEGGLGQQDANEN) and 459–485 (RAKKRRTSSQSIGQVMPNSRQEDPGPI). A compositionally biased stretch (polar residues) spans 466-477 (SSQSIGQVMPNS).

It belongs to the protein kinase superfamily. CMGC Ser/Thr protein kinase family. CDC2/CDKX subfamily.

Its subcellular location is the cytoplasm. It carries out the reaction L-seryl-[protein] + ATP = O-phospho-L-seryl-[protein] + ADP + H(+). The catalysed reaction is L-threonyl-[protein] + ATP = O-phospho-L-threonyl-[protein] + ADP + H(+). The sequence is that of Cyclin-dependent kinase-like 3 from Homo sapiens (Human).